The primary structure comprises 276 residues: 28 kDa ribonucleoprotein, chloroplastic (276 aa).

The transit peptide at 1–57 (MATNGCLISLPPFFTTTKSISSYPFLSTQLKPISLSSSLPTLLSLNKRTTQFPTFVS) directs the protein to the chloroplast. 2 consecutive RRM domains span residues 97 to 175 (AKLF…KAAP) and 191 to 269 (YRIY…AAEE).

It localises to the plastid. It is found in the chloroplast. Its function is as follows. Probably involved in the 3'-end processing of chloroplast mRNA's. The polypeptide is 28 kDa ribonucleoprotein, chloroplastic (Nicotiana sylvestris (Wood tobacco)).